Reading from the N-terminus, the 248-residue chain is Exosome complex component Rrp41 (248 aa).

It belongs to the RNase PH family. Rrp41 subfamily. Component of the archaeal exosome complex. Forms a hexameric ring-like arrangement composed of 3 Rrp41-Rrp42 heterodimers. The hexameric ring associates with a trimer of Rrp4 and/or Csl4 subunits.

Its subcellular location is the cytoplasm. Functionally, catalytic component of the exosome, which is a complex involved in RNA degradation. Has 3'-&gt;5' exoribonuclease activity. Can also synthesize heteromeric RNA-tails. The chain is Exosome complex component Rrp41 from Thermoplasma acidophilum (strain ATCC 25905 / DSM 1728 / JCM 9062 / NBRC 15155 / AMRC-C165).